We begin with the raw amino-acid sequence, 28 residues long: Ranatuerin-2SEc (28 aa).

Residues Cys23 and Cys28 are joined by a disulfide bond.

As to expression, expressed by the skin glands.

It is found in the secreted. Its function is as follows. Mast cell degranulating peptide. Causes histamine release from rat peritoneal mast cells in vitro. Has antibacterial activity against the Gram-negative bacterium E.coli K12 and Gram-positive bacterium M.luteus NCT C2665. The polypeptide is Ranatuerin-2SEc (Lithobates sevosus (Dusky gopher frog)).